An 84-amino-acid chain; its full sequence is RNA-binding protein Hfq (84 aa).

In terms of domain architecture, Sm spans 9-69; sequence DRFLNILRTN…VSTIMPESFV (61 aa).

It belongs to the Hfq family. Homohexamer.

RNA chaperone that binds small regulatory RNA (sRNAs) and mRNAs to facilitate mRNA translational regulation in response to envelope stress, environmental stress and changes in metabolite concentrations. Also binds with high specificity to tRNAs. The sequence is that of RNA-binding protein Hfq from Thermosipho africanus (strain TCF52B).